A 128-amino-acid polypeptide reads, in one-letter code: Hemoglobin subunit beta-1 (128 aa).

Residues 2–128 form the Globin domain; it reads HWTAEEKALV…VVDALSKGYH (127 aa). Heme b is bound by residues His51 and His74.

It belongs to the globin family. As to quaternary structure, hb 1 is a heterotetramer of two alpha and two beta-1 chains. Red blood cells (at protein level).

Involved in oxygen transport from gills to the various peripheral tissues. The chain is Hemoglobin subunit beta-1 from Somniosus microcephalus (Greenland sleeper shark).